The chain runs to 714 residues: Mitochondrial division protein 1 (714 aa).

Residues 240 to 298 are a coiled coil; the sequence is LNIQKNSTLSEIRDIEVEVENLRQKKEKLLGKIANIEQNQLLLEDNLKQIDDRLDFLEE. The interval 323-354 is disordered; it reads LKNDAIRNEGVTTESISSEASNLPPRRRQQLR. Polar residues predominate over residues 332–343; it reads GVTTESISSEAS. Phosphoserine is present on serine 376. WD repeat units follow at residues 396-436, 439-478, 500-539, 561-603, 604-642, 644-681, and 685-714; these read THDD…KIGE, GHLATINCMQINRDYGTLVTGGRDAALKLWNLNLAQQLYQ, AHTDEVTALSLDPSFLVSGSQDRTIRQWDLRSGKCLQTID, TQRN…RTLK, GHTDAITSLKFDSACLVTGSYDRTVRIWDLRTGLLNKFH, YSAPVLSLDLFQENAAVVVADEPSVQIYDSEKDESWSC, and GNETSVSTVKYKENYMVEGRENGDVNIWAV.

It belongs to the WD repeat MDV1/CAF4 family. In terms of assembly, interacts with CAF4, DNM1 and FIS1, components of the mitochondrial fission machinery. Interacts via its N-terminal, coiled-coil extension (NTE) with FIS1, and via its WD repeats with DNM1.

It is found in the mitochondrion outer membrane. Functionally, involved in mitochondrial fission. Has a partially redundant function to CAF4 in acting as an adapter protein, binding to FIS1 on the mitochondrial outer membrane and recruiting the dynamin-like GTPase DNM1 to form mitochondrial fission complexes. Formation of these complexes is required to promote constriction and fission of the mitochondrial compartment at a late step in mitochondrial division. This chain is Mitochondrial division protein 1 (MDV1), found in Saccharomyces cerevisiae (strain YJM789) (Baker's yeast).